The following is a 40-amino-acid chain: Alpha-conotoxin-like Qc1.4b (40 aa).

Positions 1–19 are excised as a propeptide; the sequence is SDGRNTAANDKASDLMALR. Cystine bridges form between cysteine 22-cysteine 28 and cysteine 23-cysteine 36. Residues 24-26 form a lacks the Ser-Xaa-Pro motif that is crucial for potent interaction with nAChR region; the sequence is PNP. Cysteine 36 carries the cysteine amide modification. Positions 37-40 are excised as a propeptide; the sequence is GGGR.

Belongs to the conotoxin A superfamily. Expressed by the venom duct.

The protein localises to the secreted. Its function is as follows. Alpha-conotoxins act on postsynaptic membranes, they bind to the nicotinic acetylcholine receptors (nAChR) and thus inhibit them. Has possibly a distinct nAChR binding mode from other alpha-conotoxins, due to a different three residue motif (lacks the Ser-Xaa-Pro motif). The protein is Alpha-conotoxin-like Qc1.4b of Conus quercinus (Oak cone).